A 3036-amino-acid polypeptide reads, in one-letter code: DmX-like protein 2 (3036 aa).

3 WD repeats span residues 108-145, 167-207, and 230-278; these read FLSSVTYNLAWDPQDNRLLTATDSIQLWAPPGDDILEE, KTSV…KSSI, and AHPR…EDCL. S326 bears the Phosphoserine mark. The segment at 417 to 480 is disordered; the sequence is KQVDHENDDA…EGSPRTYSRL (64 aa). Over residues 422 to 434 the composition is skewed to acidic residues; sequence ENDDADREDEEHS. Positions 435-473 are enriched in basic and acidic residues; sequence QEDRERGLHMKLDHDLSLDRESEAGTGSSEHEDGEREGS. Position 473 is a phosphoserine (S473). One copy of the WD 4 repeat lies at 492 to 532; it reads DRKIETLLTEWNKNPDMLFTIHPVDGTFLVWHVKYLDEYNP. At S588 the chain carries Phosphoserine. WD repeat units lie at residues 595–634, 751–803, and 878–920; these read HSRSHSTHMNILAPTVMMISKHIDGSLNQWAVTFADKSAF, LHTS…RKLL, and QPSQ…VQAC. The tract at residues 932-959 is disordered; the sequence is SLLSVPGQKNVDSSPETSPSVSPMPHSS. S944 and S945 each carry phosphoserine. A compositionally biased stretch (low complexity) spans 949–959; it reads SPSVSPMPHSS. A WD 8 repeat occupies 1000–1037; sequence LSSSSIYPVCLAPYLVVTTCSDNKVRFWKCCMEANPEC. Phosphoserine occurs at positions 1140, 1143, and 1151. WD repeat units lie at residues 1163–1204 and 1244–1281; these read PNIK…VTEQ and GTPSLPVSLSWVRDGILVVGMDCEMHVYAQWKHAVKFG. Phosphoserine is present on residues S1287 and S1400. T1417 is subject to Phosphothreonine. Residue S1857 is modified to Phosphoserine. Residues 1927–1936 show a composition bias toward basic and acidic residues; the sequence is ISHRMDDVPS. The tract at residues 1927–1952 is disordered; that stretch reads ISHRMDDVPSHSKALSDGNGSSGIEW. Residue S1984 is modified to Phosphoserine. Positions 1999–2033 are disordered; sequence KSTDAREKDKQSDQKASDPNMLLTPQEEDDPEGDT. Over residues 2001-2014 the composition is skewed to basic and acidic residues; that stretch reads TDAREKDKQSDQKA. A Phosphothreonine modification is found at T2022. The segment covering 2024 to 2033 has biased composition (acidic residues); the sequence is QEEDDPEGDT. Residues 2122 to 2153 are a coiled coil; it reads GSYERHQIERRRLQAKREHAERRKSWLQKNQD. A phosphoserine mark is found at S2399 and S2640. WD repeat units lie at residues 2761-2800, 2804-2843, 2850-2892, 2898-2937, 2940-2979, and 2992-3030; these read RNLHNVKRMTSHPVHQYYLTGAQDGSVRMFEWTRPQQLVC, AGNARVTRLYFNSQGNKCGVADGEGFLSIWQVNQTASNPK, CHSK…GNSL, CHDHGATVLQYAPKQQLLISGGRKGHVCIFDIRQRQLIHT, AHDSAIKALALDPYEEYFTTGSAEGNIKVWRLTGHGLIHS, and NIGAGVMQIDIIQGNRLFSCGADGTLKTRVLPNAFNIPN.

Interacts with MADD and RAB3GAP.

The protein localises to the cytoplasmic vesicle. It localises to the secretory vesicle. Its subcellular location is the synaptic vesicle membrane. It is found in the neuronal dense core vesicle. In terms of biological role, may serve as a scaffold protein for MADD and RAB3GA on synaptic vesicles. Plays a role in the brain as a key controller of neuronal and endocrine homeostatic processes. The polypeptide is DmX-like protein 2 (DMXL2) (Homo sapiens (Human)).